The sequence spans 376 residues: MSYTTFSKKKNNQLKEPMFFGQSVNIARYDQQKYNIFEKLIEKQLSFFWRPEEIDLSKDRIDFDNLPSNEKHIFISNLKYQTLLDSIQGRSPNIAFLPIVSIPELETWIETWSFSETIHSRSYTHIIRNIINNPSIVFDDIISNKNINDRAQDISIYYDELIRITAYWHLLGEGNHKINEKKVEINLKLLKRRLYLCLISVNVLEAIRFYVSFACSFAFAEREIMEGNAKIIRLIARDEALHLTGTQHILNILNNEKNNENMKNTVLECREEAIKIFISASEQEKKWAKYLFQDGSMLGLNKDILCQYIEYITNIRMHAIGFKMPFEKTSNPIPWINSWLNSDYIQAAPQETEISSYLVGQIESEISNQEFKNFKL.

Fe cation-binding residues include Asp85, Glu116, and His119. The active site involves Tyr123. Glu205, Glu239, and His242 together coordinate Fe cation.

This sequence belongs to the ribonucleoside diphosphate reductase small chain family. In terms of assembly, tetramer of two alpha and two beta subunits. Requires Fe cation as cofactor.

The enzyme catalyses a 2'-deoxyribonucleoside 5'-diphosphate + [thioredoxin]-disulfide + H2O = a ribonucleoside 5'-diphosphate + [thioredoxin]-dithiol. Functionally, provides the precursors necessary for DNA synthesis. Catalyzes the biosynthesis of deoxyribonucleotides from the corresponding ribonucleotides. This is Ribonucleoside-diphosphate reductase subunit beta (nrdB) from Buchnera aphidicola subsp. Schizaphis graminum (strain Sg).